A 519-amino-acid chain; its full sequence is ATP synthase subunit beta, mitochondrial (519 aa).

The transit peptide at 1-21 (MLTRFRSAVLRGAVSITGARA) directs the protein to the mitochondrion. ATP is bound by residues 184-191 (GAGVGKTV) and R216.

It belongs to the ATPase alpha/beta chains family. In terms of assembly, F-type ATPases have 2 components, F(1) - the catalytic core - and F(o) - the membrane proton channel. F(1) has five subunits: alpha(3), beta(3), gamma(1), delta(1), epsilon(1), plus the additional subunit P18 (Tb427.05.1710) that is not present in F(1)F(o) ATP synthase from metazoa. Subunit P18 (Tb927.5.1710) interacts with the alpha subunit with a 1:1 stoichiometry; the interaction is direct. Subunit gamma is part of the central stalk. F(o) has three main subunits: a, b and c. The trypanosomal ATPase complex contains additional subunits that are not present in the F(1)F(o) ATP synthase from metazoa.

Its subcellular location is the mitochondrion. The protein localises to the mitochondrion inner membrane. The enzyme catalyses ATP + H2O + 4 H(+)(in) = ADP + phosphate + 5 H(+)(out). Mitochondrial membrane ATP synthase (F(1)F(o) ATP synthase) produces ATP from ADP in the presence of a proton gradient across the membrane which is generated by electron transport complexes of the respiratory chain. F-type ATPases consist of two structural domains, F(1) - containing the extramembraneous catalytic core, and F(o) - containing the membrane proton channel, linked together by a central stalk and a peripheral stalk. During catalysis, ATP synthesis in the catalytic domain of F(1) is coupled via a rotary mechanism of the central stalk subunits to proton translocation. Subunits alpha and beta form the catalytic core in F(1). Rotation of the central stalk against the surrounding alpha(3)beta(3) subunits leads to hydrolysis of ATP in three separate catalytic sites on the beta subunits. Contrary to the procyclic, insect form that requires F(1)F(o) ATP synthase for ATP synthesis, the bloodstream form relies on ATP hydrolysis by F(1)F(o) ATP synthase to maintain its mitochondrial membrane potential. This is ATP synthase subunit beta, mitochondrial from Trypanosoma brucei brucei.